The chain runs to 152 residues: Superoxide dismutase [Cu-Zn] (152 aa).

Cu cation is bound by residues His45, His47, and His62. Cys56 and Cys145 form a disulfide bridge. Zn(2+) is bound by residues His62, His70, His79, and Asp82. His119 is a binding site for Cu cation.

This sequence belongs to the Cu-Zn superoxide dismutase family. As to quaternary structure, homodimer. Cu cation serves as cofactor. The cofactor is Zn(2+).

The protein resides in the cytoplasm. It catalyses the reaction 2 superoxide + 2 H(+) = H2O2 + O2. Its function is as follows. Destroys radicals which are normally produced within the cells and which are toxic to biological systems. The sequence is that of Superoxide dismutase [Cu-Zn] (SODCC) from Brassica oleracea var. capitata (Cabbage).